A 210-amino-acid polypeptide reads, in one-letter code: Oxygen-insensitive NADPH nitroreductase (210 aa).

150 to 155 contributes to the NADP(+) binding site; it reads GVSLMG.

It belongs to the nitroreductase family.

Functionally, reduction of a variety of nitroaromatic compounds using NADPH as source of reducing equivalents; two electrons are transferred. Capable of reducing metronidazole; inactive RdxA renders the bacterium resistant to this compound. The reduction of metronidazole generates hydroxylamine, a potent mutagen and bactericide. This Helicobacter pylori (strain ATCC 700392 / 26695) (Campylobacter pylori) protein is Oxygen-insensitive NADPH nitroreductase (rdxA).